Here is a 51-residue protein sequence, read N- to C-terminus: MREKIKLESSAGTGHFYTTTKNKRTMPEKMEIKKFDPVARKHVLYKETKLK.

Residues 1–23 are disordered; sequence MREKIKLESSAGTGHFYTTTKNK. Residues 10-20 show a composition bias toward polar residues; sequence SAGTGHFYTTT.

This sequence belongs to the bacterial ribosomal protein bL33 family.

The polypeptide is Large ribosomal subunit protein bL33 (Methylobacillus flagellatus (strain ATCC 51484 / DSM 6875 / VKM B-1610 / KT)).